The following is a 236-amino-acid chain: Small ribosomal subunit protein uS2c (236 aa).

It belongs to the universal ribosomal protein uS2 family.

It is found in the plastid. The protein resides in the chloroplast. The chain is Small ribosomal subunit protein uS2c (rps2) from Zea mays (Maize).